Here is a 164-residue protein sequence, read N- to C-terminus: Large ribosomal subunit protein bL17 (164 aa).

Residues Arg-127–Glu-164 form a disordered region.

This sequence belongs to the bacterial ribosomal protein bL17 family. As to quaternary structure, part of the 50S ribosomal subunit. Contacts protein L32.

This is Large ribosomal subunit protein bL17 from Treponema pallidum (strain Nichols).